The sequence spans 276 residues: Protein-glutamine gamma-glutamyltransferase (276 aa).

Belongs to the bacillus TGase family.

The enzyme catalyses L-glutaminyl-[protein] + L-lysyl-[protein] = [protein]-L-lysyl-N(6)-5-L-glutamyl-[protein] + NH4(+). In terms of biological role, probably plays a role in the assembly of the spore coat proteins by catalyzing epsilon-(gamma-glutamyl)lysine cross-links. The sequence is that of Protein-glutamine gamma-glutamyltransferase from Bacillus cereus (strain G9842).